The sequence spans 308 residues: Lipoyl synthase 2 (308 aa).

[4Fe-4S] cluster contacts are provided by cysteine 49, cysteine 54, cysteine 60, cysteine 75, cysteine 79, cysteine 82, and serine 300. One can recognise a Radical SAM core domain in the interval 61-289; it reads YASGTATFLL…KRIAEGLGFK (229 aa).

Belongs to the radical SAM superfamily. Lipoyl synthase family. Requires [4Fe-4S] cluster as cofactor.

The protein localises to the cytoplasm. It catalyses the reaction [[Fe-S] cluster scaffold protein carrying a second [4Fe-4S](2+) cluster] + N(6)-octanoyl-L-lysyl-[protein] + 2 oxidized [2Fe-2S]-[ferredoxin] + 2 S-adenosyl-L-methionine + 4 H(+) = [[Fe-S] cluster scaffold protein] + N(6)-[(R)-dihydrolipoyl]-L-lysyl-[protein] + 4 Fe(3+) + 2 hydrogen sulfide + 2 5'-deoxyadenosine + 2 L-methionine + 2 reduced [2Fe-2S]-[ferredoxin]. It functions in the pathway protein modification; protein lipoylation via endogenous pathway; protein N(6)-(lipoyl)lysine from octanoyl-[acyl-carrier-protein]: step 2/2. Catalyzes the radical-mediated insertion of two sulfur atoms into the C-6 and C-8 positions of the octanoyl moiety bound to the lipoyl domains of lipoate-dependent enzymes, thereby converting the octanoylated domains into lipoylated derivatives. The protein is Lipoyl synthase 2 of Prochlorococcus marinus (strain SARG / CCMP1375 / SS120).